A 604-amino-acid polypeptide reads, in one-letter code: Lipoma-preferred partner homolog (604 aa).

Disordered stretches follow at residues 31-96 (TPSI…LDDV) and 129-381 (DLES…AFRP). A compositionally biased stretch (polar residues) spans 32–41 (PSISVSTQQT). Composition is skewed to low complexity over residues 42–53 (PKKFAPVVAPKP) and 143–161 (GSGT…TPVT). Polar residues predominate over residues 207–226 (SYTTASTPSRPTFNVQVRTA). A compositionally biased stretch (low complexity) spans 365–377 (SGYPSSGPTSSTP). LIM zinc-binding domains follow at residues 406 to 465 (GRCA…INTL), 466 to 526 (EQCS…KFAP), and 527 to 595 (RCSV…RIQA).

The protein belongs to the zyxin/ajuba family.

It is found in the nucleus. It localises to the cytoplasm. The protein localises to the cell junction. Its function is as follows. May play a structural role at sites of cell adhesion in maintaining cell shape and motility. May be involved in signal transduction from cell adhesion sites to the nucleus. This Gallus gallus (Chicken) protein is Lipoma-preferred partner homolog (LPP).